Consider the following 497-residue polypeptide: NADH-ubiquinone oxidoreductase chain 4 (497 aa).

Helical transmembrane passes span 3-23, 42-62, 94-114, 122-142, 144-164, 178-198, 220-240, 250-270, 276-296, 313-333, 340-360, 374-394, 418-438, and 463-483; these read FLLY…LLII, LFFS…SDNI, ISLL…LISW, NSFI…FCVL, LVFF…LIGV, LFFY…VIYS, ILWA…PFHI, PTVG…YGLL, IFCD…LLGI, IAYA…TSNI, VFLM…IGCV, GLVS…LSNI, FAAL…IWLY, and VVGF…SYII.

It belongs to the complex I subunit 4 family.

The protein localises to the mitochondrion membrane. It carries out the reaction a ubiquinone + NADH + 5 H(+)(in) = a ubiquinol + NAD(+) + 4 H(+)(out). In terms of biological role, core subunit of the mitochondrial membrane respiratory chain NADH dehydrogenase (Complex I) that is believed to belong to the minimal assembly required for catalysis. Complex I functions in the transfer of electrons from NADH to the respiratory chain. The immediate electron acceptor for the enzyme is believed to be ubiquinone. This chain is NADH-ubiquinone oxidoreductase chain 4 (ND4), found in Acanthamoeba castellanii (Amoeba).